We begin with the raw amino-acid sequence, 395 residues long: D-alanine--D-alanine ligase (395 aa).

The ATP-grasp domain occupies 172 to 391 (KVVLGAAGIP…YTELITRLIE (220 aa)). ATP is bound at residue 204–266 (DAGLTYPLFI…EQGIDGREIE (63 aa)). Mg(2+)-binding residues include aspartate 345, glutamate 358, and asparagine 360.

It belongs to the D-alanine--D-alanine ligase family. The cofactor is Mg(2+). Mn(2+) serves as cofactor.

The protein localises to the cytoplasm. It carries out the reaction 2 D-alanine + ATP = D-alanyl-D-alanine + ADP + phosphate + H(+). Its pathway is cell wall biogenesis; peptidoglycan biosynthesis. Functionally, cell wall formation. The polypeptide is D-alanine--D-alanine ligase (Bifidobacterium longum subsp. infantis (strain ATCC 15697 / DSM 20088 / JCM 1222 / NCTC 11817 / S12)).